Consider the following 907-residue polypeptide: Isoleucine--tRNA ligase (907 aa).

The 'HIGH' region motif lies at 57–67 (PFANGKAHMGS). Glutamate 549 is an L-isoleucyl-5'-AMP binding site. The 'KMSKS' region signature appears at 590–594 (KLSKS). Lysine 593 contributes to the ATP binding site. Residues cysteine 867, cysteine 870, cysteine 889, and cysteine 892 each contribute to the Zn(2+) site.

This sequence belongs to the class-I aminoacyl-tRNA synthetase family. IleS type 1 subfamily. As to quaternary structure, monomer. Requires Zn(2+) as cofactor.

It localises to the cytoplasm. It carries out the reaction tRNA(Ile) + L-isoleucine + ATP = L-isoleucyl-tRNA(Ile) + AMP + diphosphate. Its function is as follows. Catalyzes the attachment of isoleucine to tRNA(Ile). As IleRS can inadvertently accommodate and process structurally similar amino acids such as valine, to avoid such errors it has two additional distinct tRNA(Ile)-dependent editing activities. One activity is designated as 'pretransfer' editing and involves the hydrolysis of activated Val-AMP. The other activity is designated 'posttransfer' editing and involves deacylation of mischarged Val-tRNA(Ile). In Methylacidiphilum infernorum (isolate V4) (Methylokorus infernorum (strain V4)), this protein is Isoleucine--tRNA ligase.